A 446-amino-acid chain; its full sequence is NADH-ubiquinone oxidoreductase chain 4 (446 aa).

Helical transmembrane passes span 4–24 (IIFF…YWMV), 56–76 (MLSY…LLAS), 93–113 (IIIL…FMFY), 114–134 (LFFE…GYQP), 139–159 (AGLY…IGIF), 182–202 (LLYF…LVHL), 218–238 (ILAG…ISFL), 245–265 (YSFV…LVCL), 272–292 (ALIA…LLTM), 297–317 (LCGS…LFCL), 330–350 (MLIN…WFLL), 373–393 (IVSW…FSAA), and 426–446 (LLHW…MLWL).

It belongs to the complex I subunit 4 family.

The protein localises to the mitochondrion membrane. The enzyme catalyses a ubiquinone + NADH + 5 H(+)(in) = a ubiquinol + NAD(+) + 4 H(+)(out). Functionally, core subunit of the mitochondrial membrane respiratory chain NADH dehydrogenase (Complex I) that is believed to belong to the minimal assembly required for catalysis. Complex I functions in the transfer of electrons from NADH to the respiratory chain. The immediate electron acceptor for the enzyme is believed to be ubiquinone. In Drosophila melanogaster (Fruit fly), this protein is NADH-ubiquinone oxidoreductase chain 4 (mt:ND4).